We begin with the raw amino-acid sequence, 2004 residues long: MLCCLVFKGLLSMDLLRFLLISPFALIKGLYRLSAYLLRLVGRLLRPVVGNLNWRAPQWMTKTANGLHCAFNRSEQWVAKHPKGISAAIVLLMAAASAAFYGYHWYLNRPQPIEPAPMVYQETSIRVSAPRTVNYQAQKPEAQPLSLNFMHSAAPITAMGQVVDQGISLTPAIEGEWKWATERTLVFTPKKAWPMGANYQITIDTEKLLAPQIKLNQTELNFTTPAFAYQLEKAEYYQDPQEAQKRSTIFHVQFNAPVDVASFEKQILLGLVEGKSKSEKKLNFSVVYDEKKLNAWIHSQPLMPMDKGGSVHLSINKGVNASVAATPTTQAQNKWVSVPNLYSLAVNSINATLVESDNNNGERALIIAISDAVKDKEIKNAVKAWLLPQHNFQAKESAKTSTDFYPWDMDDIDDNLLQQSTPLALTLNEAEQEYQPIFSFKFDAPSYRTLLIEVNNSLTSVGGYKMPEKIYQIVRVPDYPKTLRFMSQGSLLSMQGDKQISVAARNMTGMKLDIKRVIPSQLQHIVSFKSSEYSSAHFNRLSDEYFTEHFQYQTALNNDNPGEINYQGVDLSRYLANNPSARRGVFLLTLSAWDPEKRDNQQHSEEDYDEDQEWVGDSRFVVITDLGIITKQSQDRSRDVFVQSIHSGLPAADAKVSVVAKNGVVLLSQITDSKGHVHFPALDAFKNERQPVMFLVEKEGDVSFLPTRATYDRNLDFSRFDIDGEETPSDPRTLSSYLFSDRGVYRPGDRFNIGLITRTANWATALDGVPLRAEIRDPRDTLMSTLPITLDSSGFNELSYTTGENSPTGEWNVYLYLVGKNNETSMLLGHTTVNVKEFEPDRLKVQLQLTPERQQGWVKPQELQANINVQNLFGTPAQERRVTSRLILRPMYPSFAPFPDYLFYENRHNSDGFETELEEQTTDLQGMATIPLDLKSYADATYQLQLLSEAFEAGGGRSVAATARVLVSPYDSLVGVKADGDLSYINRDAVRKLNIIAVDPSLNKIALPDLSLSLIEQKYISVLTKQDSGVYKYQSRLKEQLVSEQPLQISPTGTDFTLVTQQPGDFILVVKDSQGQVLNRISYTVAGNANLTRSLDRNTELKLKLNQAEYLQGEEIEIAINAPYAGSGLITIEKDKVYSWQWFHSDTTSSVQRIRIPPAMEGNGYINVQFVRDVNSDEIFMSPLSYGVMPFKISTKARQAAIELASPSVIKPGEVLPIKVTTDSPQRVVVFAVDEGILQVARYRLKDPLDYFFRKRELSVQSAQILDLILPEFSKLMALTSAPGGDAGEGLDLHLNPFKRKQDKPVAYWSGITEVNGETTFNYPIPDYFNGKIRVMAISATPDRIGKVQTSTTVRDNFILTPNVPAMVAPGDEFDVTVGVSNNLQGLKGKAVDITVRLTPPPQLEVVGEAQHSLSLAEKRETLVSFRLRARSALGDAPLVFDASYGSQSSRRTVSTSVRPAMPFRTQSVMGRMEGNKHTVTNLRQMFDNYAQRQATASHSPLVLTQGLARYLADYPYYSSEQIVSRSIPLIMQSKHPEMDSALNQNEVRDQLKNMLRILSSRQNSTGAIGLWHASPTPDPFVTPYVVQFLLEAKSAGYSLPNDILEGANNALRLLAARPYDDLYSLRLRAFAVYLLTLQGEITTNTLASVQSTLQQLYPDSWQTDLSAIYLASSYRLLKMDDEANKLLQPTWKQLGKAYSKAWWTQNYFDPLVQDATRLYLITRHFPEKVSSIPPQALENMVLALRDEHYTTYSSAMSILALESYTSQVAAQQDTPETLQIIEISKSKGIDPNVISTLNGLFVQGDFTGEAKAIQFNNYASAPAWYVVNQSGYDLQPPKDAISNGLEISRSYTDEQGKPVTQVTLGQKVNVHLKIRANAKQGQNNLAIVDLLPGGFEVVQQTAPEPEFYDNQDDQDEETGSGWQSPLMVSGSSWYPDYSDIREDRVIIYGSASTDVKEFIYQIKSTNTGRFVVPPAYGEAMYDRNVQALSVGKGHILVVPPEAK.

Positions 1–27 are cleaved as a signal peptide; sequence MLCCLVFKGLLSMDLLRFLLISPFALI.

Belongs to the protease inhibitor I39 (alpha-2-macroglobulin) family. Bacterial alpha-2-macroglobulin subfamily.

This Yersinia pestis protein is Alpha-2-macroglobulin homolog.